The sequence spans 179 residues: Large ribosomal subunit protein uL5 (179 aa).

It belongs to the universal ribosomal protein uL5 family. In terms of assembly, part of the 50S ribosomal subunit; part of the 5S rRNA/L5/L18/L25 subcomplex. Contacts the 5S rRNA and the P site tRNA. Forms a bridge to the 30S subunit in the 70S ribosome.

This is one of the proteins that bind and probably mediate the attachment of the 5S RNA into the large ribosomal subunit, where it forms part of the central protuberance. In the 70S ribosome it contacts protein S13 of the 30S subunit (bridge B1b), connecting the 2 subunits; this bridge is implicated in subunit movement. Contacts the P site tRNA; the 5S rRNA and some of its associated proteins might help stabilize positioning of ribosome-bound tRNAs. This chain is Large ribosomal subunit protein uL5, found in Shewanella sp. (strain ANA-3).